The sequence spans 180 residues: Large ribosomal subunit protein uL5 (180 aa).

This sequence belongs to the universal ribosomal protein uL5 family. As to quaternary structure, part of the 50S ribosomal subunit; part of the 5S rRNA/L5/L18/L25 subcomplex. Contacts the 5S rRNA and the P site tRNA. Forms a bridge to the 30S subunit in the 70S ribosome.

This is one of the proteins that bind and probably mediate the attachment of the 5S RNA into the large ribosomal subunit, where it forms part of the central protuberance. In the 70S ribosome it contacts protein S13 of the 30S subunit (bridge B1b), connecting the 2 subunits; this bridge is implicated in subunit movement. Contacts the P site tRNA; the 5S rRNA and some of its associated proteins might help stabilize positioning of ribosome-bound tRNAs. The chain is Large ribosomal subunit protein uL5 from Mycoplasma pneumoniae (strain ATCC 29342 / M129 / Subtype 1) (Mycoplasmoides pneumoniae).